The primary structure comprises 212 residues: dITP/XTP pyrophosphatase (212 aa).

7–12 contributes to the substrate binding site; it reads SNNAKK. Residues Glu39 and Asp68 each contribute to the Mg(2+) site. Residue Asp68 is the Proton acceptor of the active site. Substrate contacts are provided by residues Ser69, 165–168, Lys188, and 193–194; these read FGYD and HR.

This sequence belongs to the HAM1 NTPase family. As to quaternary structure, homodimer. Mg(2+) serves as cofactor.

It carries out the reaction XTP + H2O = XMP + diphosphate + H(+). It catalyses the reaction dITP + H2O = dIMP + diphosphate + H(+). The catalysed reaction is ITP + H2O = IMP + diphosphate + H(+). Its function is as follows. Pyrophosphatase that catalyzes the hydrolysis of nucleoside triphosphates to their monophosphate derivatives, with a high preference for the non-canonical purine nucleotides XTP (xanthosine triphosphate), dITP (deoxyinosine triphosphate) and ITP. Seems to function as a house-cleaning enzyme that removes non-canonical purine nucleotides from the nucleotide pool, thus preventing their incorporation into DNA/RNA and avoiding chromosomal lesions. The sequence is that of dITP/XTP pyrophosphatase from Leptothrix cholodnii (strain ATCC 51168 / LMG 8142 / SP-6) (Leptothrix discophora (strain SP-6)).